A 358-amino-acid polypeptide reads, in one-letter code: Alanine racemase (358 aa).

The active-site Proton acceptor; specific for D-alanine is K35. At K35 the chain carries N6-(pyridoxal phosphate)lysine. R130 lines the substrate pocket. Y255 (proton acceptor; specific for L-alanine) is an active-site residue. M303 is a substrate binding site.

Belongs to the alanine racemase family. Pyridoxal 5'-phosphate is required as a cofactor.

It catalyses the reaction L-alanine = D-alanine. Its pathway is amino-acid biosynthesis; D-alanine biosynthesis; D-alanine from L-alanine: step 1/1. Catalyzes the interconversion of L-alanine and D-alanine. May also act on other amino acids. This is Alanine racemase (alr) from Shewanella loihica (strain ATCC BAA-1088 / PV-4).